Consider the following 296-residue polypeptide: GTPase Era (296 aa).

Positions 7-174 (KCSMSAIVGT…VDYLCETSPY (168 aa)) constitute an Era-type G domain. Positions 15 to 22 (GTTNAGKS) are G1. 15–22 (GTTNAGKS) is a binding site for GTP. The segment at 41–45 (QTTRV) is G2. The tract at residues 62–65 (DTPG) is G3. GTP contacts are provided by residues 62-66 (DTPGI) and 124-127 (NKID). The segment at 124–127 (NKID) is G4. The G5 stretch occupies residues 153 to 155 (ISA). The 78-residue stretch at 205 to 282 (LRHELPYSLS…HLFLFVKVRE (78 aa)) folds into the KH type-2 domain.

Belongs to the TRAFAC class TrmE-Era-EngA-EngB-Septin-like GTPase superfamily. Era GTPase family. In terms of assembly, monomer.

The protein localises to the cytoplasm. It is found in the cell inner membrane. Its function is as follows. An essential GTPase that binds both GDP and GTP, with rapid nucleotide exchange. Plays a role in 16S rRNA processing and 30S ribosomal subunit biogenesis and possibly also in cell cycle regulation and energy metabolism. This is GTPase Era from Ehrlichia ruminantium (strain Gardel).